The chain runs to 350 residues: Membrane progestin receptor alpha (350 aa).

The Cytoplasmic segment spans residues 1–80 (MATMVAQKLS…HNEAVNVWTH (80 aa)). A helical transmembrane segment spans residues 81–101 (LLAALVLLLRLAIFVGTVDFW). The Extracellular portion of the chain corresponds to 102–105 (GDPH). Residues 106-126 (ALPLFIIVLASFTYLSLSALA) form a helical membrane-spanning segment. Residues 127 to 139 (HLLQAKSEFWHYS) lie on the Cytoplasmic side of the membrane. Residues 140-160 (FFFLDYVGVAVYQFGSALAHF) traverse the membrane as a helical segment. Topologically, residues 161–165 (YYAIE) are extracellular. The chain crosses the membrane as a helical span at residues 166 to 186 (PAWHAQVQTIFLPMAAFLAWL). Residues 187-239 (SCTGSCYNKYIQKPGLLGRTCQEVPSALAYALDISPVAHRILASPEPATDDPA) are Cytoplasmic-facing. The helical transmembrane segment at 240–260 (LLYHKCQVVFFLLAAAFFSAF) threads the bilayer. The Extracellular portion of the chain corresponds to 261–278 (MPERWFPGSCHIFGQGHQ). The chain crosses the membrane as a helical span at residues 279 to 299 (LFHVFLVLCTLAQLEAVALDY). Over 300–318 (EARRPIYEPLHTRWPHNFS) the chain is Cytoplasmic. Residues 319–339 (GLFLLTVGSSILTAFLLSQLV) form a helical membrane-spanning segment. Topologically, residues 340 to 350 (RRKLDLDRKTQ) are extracellular.

The protein belongs to the ADIPOR family.

It localises to the cell membrane. Its function is as follows. Plasma membrane progesterone (P4) receptor coupled to G proteins. Seems to act through a G(i) mediated pathway. May be involved in oocyte maturation. Involved in neurosteroid inhibition of apoptosis. Also binds dehydroepiandrosterone (DHEA), pregnanolone, pregnenolone and allopregnanolone. This is Membrane progestin receptor alpha (PAQR7) from Sus scrofa (Pig).